Consider the following 860-residue polypeptide: Leucine--tRNA ligase (860 aa).

The 'HIGH' region signature appears at 42–52 (PYPSGRLHMGH). The 'KMSKS' region motif lies at 619 to 623 (KMSKS). Residue Lys-622 participates in ATP binding.

This sequence belongs to the class-I aminoacyl-tRNA synthetase family.

Its subcellular location is the cytoplasm. It carries out the reaction tRNA(Leu) + L-leucine + ATP = L-leucyl-tRNA(Leu) + AMP + diphosphate. This chain is Leucine--tRNA ligase, found in Klebsiella pneumoniae subsp. pneumoniae (strain ATCC 700721 / MGH 78578).